A 188-amino-acid polypeptide reads, in one-letter code: Ribosome-recycling factor (188 aa).

Belongs to the RRF family.

It localises to the cytoplasm. Its function is as follows. Responsible for the release of ribosomes from messenger RNA at the termination of protein biosynthesis. May increase the efficiency of translation by recycling ribosomes from one round of translation to another. The polypeptide is Ribosome-recycling factor (Akkermansia muciniphila (strain ATCC BAA-835 / DSM 22959 / JCM 33894 / BCRC 81048 / CCUG 64013 / CIP 107961 / Muc)).